The following is a 276-amino-acid chain: NH(3)-dependent NAD(+) synthetase (276 aa).

Residue 43 to 50 (GISGGVDS) coordinates ATP. Aspartate 49 lines the Mg(2+) pocket. Arginine 146 contributes to the deamido-NAD(+) binding site. ATP is bound at residue threonine 166. Residue glutamate 171 coordinates Mg(2+). Lysine 179 and aspartate 186 together coordinate deamido-NAD(+). Positions 195 and 217 each coordinate ATP. Deamido-NAD(+) is bound at residue 266–267 (HK).

This sequence belongs to the NAD synthetase family. In terms of assembly, homodimer.

It carries out the reaction deamido-NAD(+) + NH4(+) + ATP = AMP + diphosphate + NAD(+) + H(+). It functions in the pathway cofactor biosynthesis; NAD(+) biosynthesis; NAD(+) from deamido-NAD(+) (ammonia route): step 1/1. Its function is as follows. Catalyzes the ATP-dependent amidation of deamido-NAD to form NAD. Uses ammonia as a nitrogen source. This Vibrio vulnificus (strain CMCP6) protein is NH(3)-dependent NAD(+) synthetase.